We begin with the raw amino-acid sequence, 233 residues long: Probable O-methyltransferase Rv1703c (233 aa).

S-adenosyl-L-methionine contacts are provided by residues Val55, Glu77, 79–80 (GT), and Glu102. Residue Asp157 participates in a divalent metal cation binding. An S-adenosyl-L-methionine-binding site is contributed by Asp159. Residues Asp185 and Asn186 each contribute to the a divalent metal cation site.

Belongs to the class I-like SAM-binding methyltransferase superfamily. Cation-dependent O-methyltransferase family.

Its function is as follows. Specifically methylates an O atom of its substrate. The chain is Probable O-methyltransferase Rv1703c from Mycobacterium tuberculosis (strain ATCC 25618 / H37Rv).